Here is a 362-residue protein sequence, read N- to C-terminus: Phosphoserine aminotransferase (362 aa).

An L-glutamate-binding site is contributed by Arg-43. Pyridoxal 5'-phosphate contacts are provided by residues 77–78 (AS), Trp-103, Thr-153, Asp-173, and Gln-196. Position 197 is an N6-(pyridoxal phosphate)lysine (Lys-197). 238 to 239 (NT) contributes to the pyridoxal 5'-phosphate binding site.

The protein belongs to the class-V pyridoxal-phosphate-dependent aminotransferase family. SerC subfamily. Homodimer. The cofactor is pyridoxal 5'-phosphate.

Its subcellular location is the cytoplasm. It catalyses the reaction O-phospho-L-serine + 2-oxoglutarate = 3-phosphooxypyruvate + L-glutamate. The catalysed reaction is 4-(phosphooxy)-L-threonine + 2-oxoglutarate = (R)-3-hydroxy-2-oxo-4-phosphooxybutanoate + L-glutamate. It functions in the pathway amino-acid biosynthesis; L-serine biosynthesis; L-serine from 3-phospho-D-glycerate: step 2/3. It participates in cofactor biosynthesis; pyridoxine 5'-phosphate biosynthesis; pyridoxine 5'-phosphate from D-erythrose 4-phosphate: step 3/5. Its function is as follows. Catalyzes the reversible conversion of 3-phosphohydroxypyruvate to phosphoserine and of 3-hydroxy-2-oxo-4-phosphonooxybutanoate to phosphohydroxythreonine. The sequence is that of Phosphoserine aminotransferase (serC) from Niallia circulans (Bacillus circulans).